A 624-amino-acid chain; its full sequence is Pentatricopeptide repeat-containing protein At2g32630 (624 aa).

PPR repeat units follow at residues 153–187 (FEKF…GLSI), 188–222 (DERS…GVKI), 223–257 (TVYS…GIKP), 258–292 (EAYT…GVVY), 293–327 (NKVT…GIES), 328–362 (DVHV…GLSP), 363–397 (SSYT…GVNI), 398–432 (TQVV…GFQA), 433–467 (DVFT…GVKL), 468–502 (STVS…GVQP), 503–537 (NAIT…GMDP), 538–572 (DSYT…GLDQ), and 573–607 (NSVT…GYTI).

This sequence belongs to the PPR family. P subfamily.

The polypeptide is Pentatricopeptide repeat-containing protein At2g32630 (Arabidopsis thaliana (Mouse-ear cress)).